We begin with the raw amino-acid sequence, 271 residues long: Troponin T, fast skeletal muscle (271 aa).

Residues Met1–Glu21 are compositionally biased toward acidic residues. A disordered region spans residues Met1–Lys74. The residue at position 2 (Ser2) is an N-acetylserine. Ser2 is modified (phosphoserine). Basic and acidic residues-rich tracts occupy residues Glu29–Arg53 and Pro62–Lys74. Ser90 is modified (phosphoserine). Basic and acidic residues predominate over residues Arg113–Lys155. Residues Arg113–Leu192 form a disordered region. Phosphoserine is present on residues Ser161, Ser168, and Ser169. Residues Thr183 to Leu192 show a composition bias toward basic and acidic residues. At Ser205 the chain carries Phosphoserine. Tyr221 is modified (phosphotyrosine). Positions Asp249–Lys271 are disordered.

Belongs to the troponin T family.

Troponin T is the tropomyosin-binding subunit of troponin, the thin filament regulatory complex which confers calcium-sensitivity to striated muscle actomyosin ATPase activity. The sequence is that of Troponin T, fast skeletal muscle (TNNT3) from Sus scrofa (Pig).